Consider the following 1436-residue polypeptide: DNA-directed RNA polymerase subunit beta (1436 aa).

It belongs to the RNA polymerase beta chain family. The RNAP catalytic core consists of 2 alpha, 1 beta, 1 beta' and 1 omega subunit. When a sigma factor is associated with the core the holoenzyme is formed, which can initiate transcription.

It carries out the reaction RNA(n) + a ribonucleoside 5'-triphosphate = RNA(n+1) + diphosphate. Functionally, DNA-dependent RNA polymerase catalyzes the transcription of DNA into RNA using the four ribonucleoside triphosphates as substrates. This Wolbachia pipientis protein is DNA-directed RNA polymerase subunit beta.